The chain runs to 353 residues: Phosphate acyltransferase (353 aa).

The protein belongs to the PlsX family. As to quaternary structure, homodimer. Probably interacts with PlsY.

The protein localises to the cytoplasm. The catalysed reaction is a fatty acyl-[ACP] + phosphate = an acyl phosphate + holo-[ACP]. It functions in the pathway lipid metabolism; phospholipid metabolism. Catalyzes the reversible formation of acyl-phosphate (acyl-PO(4)) from acyl-[acyl-carrier-protein] (acyl-ACP). This enzyme utilizes acyl-ACP as fatty acyl donor, but not acyl-CoA. The sequence is that of Phosphate acyltransferase from Syntrophobacter fumaroxidans (strain DSM 10017 / MPOB).